The following is a 152-amino-acid chain: Transcriptional regulator MraZ (152 aa).

2 SpoVT-AbrB domains span residues 5–52 and 81–124; these read ASAI…PVQE and AHEC…DEAA.

Belongs to the MraZ family. As to quaternary structure, forms oligomers.

Its subcellular location is the cytoplasm. The protein resides in the nucleoid. The chain is Transcriptional regulator MraZ from Shewanella piezotolerans (strain WP3 / JCM 13877).